The chain runs to 299 residues: Putative zinc-binding protein ORF12 (299 aa).

This is Putative zinc-binding protein ORF12 (ORF12) from Ictaluridae (bullhead catfishes).